Consider the following 2007-residue polypeptide: Structural maintenance of chromosomes flexible hinge domain-containing protein 1 (2007 aa).

The residue at position 2 (A2) is an N-acetylalanine. Residues 111–702 (TKERIDFLPH…LSVTWPEGDE (592 aa)) are ATPase activity domain. S833 is modified (phosphoserine). K1350 is subject to N6-acetyllysine. A Glycyl lysine isopeptide (Lys-Gly) (interchain with G-Cter in SUMO2) cross-link involves residue K1375. T1500 carries the post-translational modification Phosphothreonine. Residues 1721–1848 (GDILGKIAHL…DNLDAANHYR (128 aa)) form the SMC hinge domain. At K1803 the chain carries N6-succinyllysine. S1975 is modified (phosphoserine). The interval 1984 to 2007 (PIPTKRMRRESTRQNRRPKGDVPN) is disordered.

This sequence belongs to the SMC family. Highly divergent. As to quaternary structure, homodimer; homodimerizes via its SMC hinge domain. Interacts with LRIF1. Sumoylated with SUMO1. As to expression, during embryogenesis, specifically expressed in immature olfactory sensory neurons.

The protein resides in the chromosome. It catalyses the reaction ATP + H2O = ADP + phosphate + H(+). In terms of biological role, non-canonical member of the structural maintenance of chromosomes (SMC) protein family that plays a key role in epigenetic silencing by regulating chromatin architecture. Promotes heterochromatin formation in both autosomes and chromosome X, probably by mediating the merge of chromatin compartments. Plays a key role in chromosome X inactivation in females by promoting the spreading of heterochromatin. Recruited to inactivated chromosome X by Xist RNA and acts by mediating the merge of chromatin compartments: promotes random chromatin interactions that span the boundaries of existing structures, leading to create a compartment-less architecture typical of inactivated chromosome X. Required to facilitate Xist RNA spreading. Also required for silencing of a subset of clustered autosomal loci in somatic cells, such as the DUX4 locus. Has ATPase activity; may participate in structural manipulation of chromatin in an ATP-dependent manner as part of its role in gene expression regulation. Also plays a role in DNA repair: localizes to sites of DNA double-strand breaks in response to DNA damage to promote the repair of DNA double-strand breaks. Acts by promoting non-homologous end joining (NHEJ) and inhibiting homologous recombination (HR) repair. Required during preimplantation development, probably acts by regulating chromatin architecture. The protein is Structural maintenance of chromosomes flexible hinge domain-containing protein 1 of Mus musculus (Mouse).